The sequence spans 334 residues: Ephrin-B1 (334 aa).

The first 25 residues, 1–25, serve as a signal peptide directing secretion; the sequence is MARPRGGRWLLGVLLALCRLAAPLA. One can recognise an Ephrin RBD domain in the interval 26–160; sequence KSLEPVSWSA…TRSMKIVMKV (135 aa). Over 26-231 the chain is Extracellular; sequence KSLEPVSWSA…FLSSKVAVFA (206 aa). 2 disulfide bridges follow: C60–C97 and C85–C149. A glycan (N-linked (GlcNAc...) asparagine) is linked at N135. A disordered region spans residues 175-218; it reads SRPSKEADNTVKIVTQSPRHKVPTVEEPGKPGSVNQNGQETQGP. The span at 207–218 shows a compositional bias: polar residues; that stretch reads SVNQNGQETQGP. A helical transmembrane segment spans residues 232-252; that stretch reads AIGAGCVIFILIIIFLVVLLI. Residues 253 to 334 are Cytoplasmic-facing; sequence KIRKRHRKHT…QSPANIYYKV (82 aa). The PDZ-binding motif lies at 332–334; the sequence is YKV.

It belongs to the ephrin family. In terms of assembly, binds to the receptor tyrosine kinase EPHB2. Interacts with GRIP1 and GRIP2. Post-translationally, inducible phosphorylation of tyrosine residues in the cytoplasmic domain.

It localises to the membrane. Functionally, cell surface transmembrane ligand for Eph receptors, a family of receptor tyrosine kinases which are crucial for migration, repulsion and adhesion during neuronal, vascular and epithelial development. Binds promiscuously Eph receptors residing on adjacent cells, leading to contact-dependent bidirectional signaling into neighboring cells. The signaling pathway downstream of the receptor is referred to as forward signaling while the signaling pathway downstream of the ephrin ligand is referred to as reverse signaling. This is Ephrin-B1 (EFNB1) from Gallus gallus (Chicken).